The following is a 90-amino-acid chain: Putative cytochrome c oxidase subunit 5b-like (90 aa).

Zn(2+)-binding residues include Cys-43, Cys-67, and Cys-70.

It belongs to the cytochrome c oxidase subunit 5B (TC 3.D.4.11) family.

In Arabidopsis thaliana (Mouse-ear cress), this protein is Putative cytochrome c oxidase subunit 5b-like.